A 713-amino-acid chain; its full sequence is Leucine-rich repeat-containing protein 4B (713 aa).

The first 35 residues, 1-35 (MARARGSPCPPLPPGRMSWPHGALLFLWLFSPPLG), serve as a signal peptide directing secretion. Topologically, residues 36–576 (AGGGGVAVTS…DLDDVMKTTK (541 aa)) are extracellular. The region spanning 48-86 (GGGSPPATSCPVACSCSNQASRVICTRRDLAEVPASIPV) is the LRRNT domain. LRR repeat units follow at residues 87–108 (NTRY…TFKH), 111–132 (HLEI…AFNG), 135–156 (SLNT…AFEY), 159–180 (KLRE…AFNR), 183–205 (SLRR…AFEG), 208–229 (NLRY…TALV), 230–251 (RLEE…SFQG), 254–275 (SLRK…AFDD), and 278–299 (SLEE…LFTP). N224 is a glycosylation site (N-linked (GlcNAc...) asparagine). N-linked (GlcNAc...) asparagine glycosylation is found at N283, N333, N374, N400, N422, N425, N444, and N452. In terms of domain architecture, LRRCT spans 311 to 363 (NPWHCNCDVLWLSWWLKETVPSNTTCCARCHAPAGLKGRYIGELDQSHFTCYA). The Ig-like C2-type domain occupies 364–452 (PVIVEPPTDL…GNTTASATLN (89 aa)). A disulfide bridge connects residues C385 and C436. Residues 497–551 (TQPGEEALQPRGTEKEPPGPTTDGVWGGGRPGDAAGPASSSTTAPAPRSSRPTEK) form a disordered region. The segment covering 528–546 (GDAAGPASSSTTAPAPRSS) has biased composition (low complexity). The chain crosses the membrane as a helical span at residues 577 to 597 (IIIGCFVAITFMAAVMLVAFY). Residues 598 to 713 (KLRKQHQLHK…SKENVQETQI (116 aa)) are Cytoplasmic-facing. S693 is subject to Phosphoserine. Residues 694 to 713 (IHEPLLFKSGSKENVQETQI) form a disordered region. Positions 703–713 (GSKENVQETQI) are enriched in basic and acidic residues.

Interacts with PTPRF. Interacts with DLG4. In terms of processing, N-glycosylated. O-glycosylated; contains sialic acid.

It localises to the membrane. Its subcellular location is the presynaptic cell membrane. Synaptic adhesion protein. Regulates the formation of excitatory synapses. The trans-synaptic adhesion between LRRC4B and PTPRF regulates the formation of excitatory synapses in a bidirectional manner. This Homo sapiens (Human) protein is Leucine-rich repeat-containing protein 4B (LRRC4B).